The sequence spans 474 residues: UDP-glycosyltransferase 71C2 (474 aa).

UDP-alpha-D-glucose-binding positions include Ser293, 352 to 354 (APQ), 369 to 377 (HCGWNSILE), and 391 to 394 (YAEQ).

Belongs to the UDP-glycosyltransferase family.

Functionally, possesses low quercetin 3-O-glucosyltransferase, 7-O-glucosyltransferase and 3'-O-glucosyltransferase activities in vitro. Glucosylates other secondary metabolites in vitro like vanillin, trans-resveratrol, curumin and etoposide. This is UDP-glycosyltransferase 71C2 (UGT71C2) from Arabidopsis thaliana (Mouse-ear cress).